The chain runs to 1861 residues: Polyketide synthase 2 (1861 aa).

The 417-residue stretch at 109–525 folds into the Ketosynthase family 3 (KS3) domain; the sequence is DSKIAIIGMS…GGNSALLLED (417 aa). Residues cysteine 264, histidine 399, and histidine 441 each act as for beta-ketoacyl synthase activity in the active site. The segment at 626–931 is malonyl-CoA:ACP transacylase (MAT) domain; the sequence is GFVFSGQGAQ…PSLHRKDDGW (306 aa). Serine 716 serves as the catalytic For acyl/malonyl transferase activity. Residues 1008-1312 form a product template (PT) domain region; it reads TSSVQKVIQQ…VFGGMTVLPP (305 aa). Positions 1012–1146 are N-terminal hotdog fold; that stretch reads QKVIQQTDGP…CILRFADPKS (135 aa). Residues 1012-1318 enclose the PKS/mFAS DH domain; the sequence is QKVIQQTDGP…VLPPRRGADA (307 aa). The Proton acceptor; for dehydratase activity role is filled by histidine 1045. Positions 1174 to 1318 are C-terminal hotdog fold; that stretch reads DSLLSKGIVY…VLPPRRGADA (145 aa). Aspartate 1232 acts as the Proton donor; for dehydratase activity in catalysis. Residues 1356-1433 form the Carrier 1 domain; it reads SPQSGAIHRI…ELRLFLAADQ (78 aa). Serine 1393 carries the O-(pantetheine 4'-phosphoryl)serine modification. The disordered stretch occupies residues 1441–1470; the sequence is CESSNGQHTPQTSDKGSGTLTAQKPDHDTD. Over residues 1442-1462 the composition is skewed to polar residues; the sequence is ESSNGQHTPQTSDKGSGTLTA. The 75-residue stretch at 1472-1546 folds into the Carrier 2 domain; the sequence is EMTLNRVCAI…SLQKTLRGTE (75 aa). The residue at position 1506 (serine 1506) is an O-(pantetheine 4'-phosphoryl)serine. The segment at 1582–1855 is thioesterase (TE) domain; it reads ASAPHATSIL…IIEMSNLIGD (274 aa). Serine 1685 functions as the For thioesterase activity in the catalytic mechanism.

Polyketide synthase; part of the Pks2 gene cluster that mediates the formation of infectious structures (appressoria), enabling these fungi to kill insects faster. The product of the Pks2 gene cluster is different from the one of Pks1 and has still not been identified. The protein is Polyketide synthase 2 of Metarhizium acridum (strain CQMa 102).